A 469-amino-acid polypeptide reads, in one-letter code: MSAPRTLYDKIWDDHLVDSQDDGTCLLYIDRHLVHEVTSPQAFEGLRMAGRKVRAPEKTLAVVDHNVPTSPDRHLGIKNEESRIQVEALARNAADFGVEYYSENDKRQGIVHIVGPEQGFTLPGMTIVCGDSHTSTHGAFGALAHGIGTSEVEHVLATQTLIQKKAKNMLVRVDGQLPPGVTAKDIILAIIGEIGTAGGTGHVIEFAGEAIRSLSMEGRMTVCNMTIEGGARAGLIAPDETTFEYIKDKPRAPKGEAWDRAVEYWKTLHTDEGAHYDRVVVLDAANLPPIVSWGSSPEDVVSVQGVVPNPDDIQDETKRTSKWRALDYMGLKPGTKITDIAIDRVFIGSCTNGRIEDLRAVAEVVEGRKVAPTVSAMIVPGSGLVKEQAEAEGLDKIFKEAGFDWREPGCSMCLAMNDDRLKPGERCASTSNRNFEGRQGFKGRTHLLSPAMAAAAAVAGHFVDIREWK.

3 residues coordinate [4Fe-4S] cluster: Cys350, Cys410, and Cys413.

This sequence belongs to the aconitase/IPM isomerase family. LeuC type 1 subfamily. In terms of assembly, heterodimer of LeuC and LeuD. It depends on [4Fe-4S] cluster as a cofactor.

The catalysed reaction is (2R,3S)-3-isopropylmalate = (2S)-2-isopropylmalate. The protein operates within amino-acid biosynthesis; L-leucine biosynthesis; L-leucine from 3-methyl-2-oxobutanoate: step 2/4. In terms of biological role, catalyzes the isomerization between 2-isopropylmalate and 3-isopropylmalate, via the formation of 2-isopropylmaleate. In Rhizobium meliloti (strain 1021) (Ensifer meliloti), this protein is 3-isopropylmalate dehydratase large subunit.